A 306-amino-acid polypeptide reads, in one-letter code: High osmolarity signaling protein MOS1 (306 aa).

Residues 1-23 (MEHSRPYGGRKRMSLGNILGDPF) are Cytoplasmic-facing. A helical membrane pass occupies residues 24–44 (ALATISISLLAWFITFISCVI). Residues 45–67 (AQVQANKNKGLPDKDNPDGNFPP) lie on the Extracellular side of the membrane. Residues 68-88 (FAWWAVVYSLFLIVGVVIVVA) traverse the membrane as a helical segment. Over 89-96 (SDAIQTYH) the chain is Cytoplasmic. The chain crosses the membrane as a helical span at residues 97-117 (VAVTGYLAGGMVLVTSGVNSL). Over 118-126 (VYSKNGARE) the chain is Extracellular. A helical membrane pass occupies residues 127 to 147 (AAAAGFILLSMVVIVWIFYFG). The Cytoplasmic portion of the chain corresponds to 148–306 (STPSSTPRAF…IAPSNYLILL (159 aa)). The disordered stretch occupies residues 204-242 (FENPSPVGGASQAPTAPTMPTYGNNTMQPNNKSNDEEVL). Over residues 224–235 (TYGNNTMQPNNK) the composition is skewed to polar residues. The SH3 domain occupies 246–306 (DYPYQAKAIY…IAPSNYLILL (61 aa)).

It belongs to the SHO1 family. As to quaternary structure, forms homooligomers.

It localises to the cell membrane. Functionally, plasma membrane osmosensor that activates the high osmolarity glycerol (HOG) MAPK signaling pathway in response to high osmolarity. Affects fungal virulence. The chain is High osmolarity signaling protein MOS1 (MOS1) from Metarhizium robertsii (strain ARSEF 23 / ATCC MYA-3075) (Metarhizium anisopliae (strain ARSEF 23)).